The chain runs to 346 residues: N-acetyl-gamma-glutamyl-phosphate reductase (346 aa).

Cys-154 is a catalytic residue.

The protein belongs to the NAGSA dehydrogenase family. Type 1 subfamily.

Its subcellular location is the cytoplasm. The enzyme catalyses N-acetyl-L-glutamate 5-semialdehyde + phosphate + NADP(+) = N-acetyl-L-glutamyl 5-phosphate + NADPH + H(+). It functions in the pathway amino-acid biosynthesis; L-arginine biosynthesis; N(2)-acetyl-L-ornithine from L-glutamate: step 3/4. In terms of biological role, catalyzes the NADPH-dependent reduction of N-acetyl-5-glutamyl phosphate to yield N-acetyl-L-glutamate 5-semialdehyde. The protein is N-acetyl-gamma-glutamyl-phosphate reductase of Rhodopirellula baltica (strain DSM 10527 / NCIMB 13988 / SH1).